Reading from the N-terminus, the 260-residue chain is Phosphate import ATP-binding protein PstB 1 (260 aa).

Residues 13 to 255 form the ABC transporter domain; the sequence is VRVRDLNLWY…PHTKKAEDYI (243 aa). ATP is bound at residue 45–52; sequence GPSGCGKS.

Belongs to the ABC transporter superfamily. Phosphate importer (TC 3.A.1.7) family. As to quaternary structure, the complex is composed of two ATP-binding proteins (PstB), two transmembrane proteins (PstC and PstA) and a solute-binding protein (PstS).

The protein resides in the cell inner membrane. The catalysed reaction is phosphate(out) + ATP + H2O = ADP + 2 phosphate(in) + H(+). In terms of biological role, part of the ABC transporter complex PstSACB involved in phosphate import. Responsible for energy coupling to the transport system. This Chromohalobacter salexigens (strain ATCC BAA-138 / DSM 3043 / CIP 106854 / NCIMB 13768 / 1H11) protein is Phosphate import ATP-binding protein PstB 1.